The primary structure comprises 354 residues: MAPSAQPLPVSVSDEKYANVKWEELAFKFVRTDYMYVAKCNHGESFQEGKILPFADLQLNPCAAVLQYGQGLYEGLKAYRTEDGRILLFRPDQNGLRLQAGADRLYMPYPSVDQFVSAIKQVALANKKWIPPPGKGTLYIRPILFGSGPILGSFPIPETTFTAFACPVGRYHKDNSGLNLKIEDQFRRAFPSGTGGVKSITNYCPVWIPLAEAKKQGFSDILFLDAATGKNIEELFAANVFMLKGNVVSTPTIAGTILPGVTRNCVMELCRDFGYQVEERTIPLVDFLDADEAFCTGTASIVTSIASVTFKDKKTGFKTGEETLAAKLYETLSDIQTGRVEDTKGWTVEIDRQG.

N6-(pyridoxal phosphate)lysine is present on Lys198.

The protein belongs to the class-IV pyridoxal-phosphate-dependent aminotransferase family. The cofactor is pyridoxal 5'-phosphate. Mostly expressed in phloem.

It localises to the cytoplasm. It catalyses the reaction a 2-oxocarboxylate + L-methionine = 4-methylsulfanyl-2-oxobutanoate + an L-alpha-amino acid. Functionally, converts 2-oxo acids to branched-chain amino acids. Shows activity with L-Leu, L-Ile and L-Val as amino donors and alpha-keto-glutarate as an amino acceptor, but no activity for D-isomers of Leu, Ile, Val, Asp, Glu or Ala. Acts on methionine and its derivatives and the corresponding 2-oxo acids. Catalyzes the initial deamination of methionine to 4-methylthio-2-oxobutyrate as well as the transamination of other typical intermediates of the methionine chain elongation pathway. This chain is Methionine aminotransferase BCAT4 (BCAT4), found in Arabidopsis thaliana (Mouse-ear cress).